Here is a 196-residue protein sequence, read N- to C-terminus: Small nuclear ribonucleoprotein-associated protein B (196 aa).

One can recognise a Sm domain in the interval 7 to 101; sequence AHSSRLANLI…ILSTVVEDKP (95 aa). The Nuclear localization signal motif lies at 105 to 132; that stretch reads KKERLVRDKKEKKQAQKQTKLRKEKEKK. The segment covering 108–118 has biased composition (basic and acidic residues); the sequence is RLVRDKKEKKQ. The tract at residues 108-196 is disordered; sequence RLVRDKKEKK…FQPPPGFKRK (89 aa). Positions 140–181 are enriched in polar residues; the sequence is NTANAKHTSSNSREIAQPSSSRYNGGNDNIGANRSRFNNEAP.

The protein belongs to the snRNP SmB/SmN family. In terms of assembly, component of the Sm core complex, present in spliceosomal snRNP U1, U2, U4/U6 and U5. The core complex contains SMB1, SMD1, SMD2, SMD3, SME1, SMX3 and SMX2 (Sm proteins B, D1, D2, D3, E, F and G, respectively), and is probably a heptameric ring structure. SMB1 specifically interacts with SMD3. Belongs to the CWC complex (or CEF1-associated complex), a spliceosome sub-complex reminiscent of a late-stage spliceosome composed of the U2, U5 and U6 snRNAs and at least BUD13, BUD31, BRR2, CDC40, CEF1, CLF1, CUS1, CWC2, CWC15, CWC21, CWC22, CWC23, CWC24, CWC25, CWC27, ECM2, HSH155, IST3, ISY1, LEA1, MSL1, NTC20, PRP8, PRP9, PRP11, PRP19, PRP21, PRP22, PRP45, PRP46, SLU7, SMB1, SMD1, SMD2, SMD3, SMX2, SMX3, SNT309, SNU114, SPP2, SYF1, SYF2, RSE1 and YJU2. Component of the U4/U6-U5 tri-snRNP complex composed of the U4, U6 and U5 snRNAs and at least PRP3, PRP4, PRP6, PRP8, PRP18, PRP38, SNU13, SNU23, SNU66, SNU114, SPP381, SMB1, SMD1, SMD2, SMD3, SMX2, SMX3, LSM2, LSM3, LSM4, LSM5, LSM6, LSM7, LSM8, BRR2 and DIB1. Interacts with the trimethylguanosine synthase TGS1.

The protein resides in the nucleus. The protein localises to the cytoplasm. In terms of biological role, plays a role in pre-mRNA splicing as a core component of the spliceosomal U1, U2, U4 and U5 small nuclear ribonucleoproteins (snRNPs), the building blocks of the spliceosome. The sequence is that of Small nuclear ribonucleoprotein-associated protein B (SMB1) from Saccharomyces cerevisiae (strain ATCC 204508 / S288c) (Baker's yeast).